A 257-amino-acid chain; its full sequence is K88 minor fimbrial subunit FaeJ (257 aa).

Positions 1 to 26 are cleaved as a signal peptide; it reads MLNIIHRLKSGMFPALFFLTSASVLA.

It localises to the fimbrium. Its function is as follows. K88 minor fimbrial subunit, plays an essential role in the biogenesis of the K88 fimbriae. Fimbriae (also called pili), are polar filaments radiating from the surface of the bacterium to a length of 0.5-1.5 micrometers and numbering 100-300 per cell. They enable bacteria to colonize the epithelium of specific host organs. This chain is K88 minor fimbrial subunit FaeJ (faeJ), found in Escherichia coli.